The primary structure comprises 410 residues: Putative ribosomal large subunit pseudouridine synthase SVR1, chloroplastic (410 aa).

Residues 1 to 35 constitute a chloroplast transit peptide; sequence MASVAASSSISFAASFLKIKAFPLSPRFFPIRTLR. The tract at residues 96–143 is disordered; that stretch reads HNLAIDATTQNPKKKDKSKKKQPQATSSSSATTTASSPASHSEVKPKL. A compositionally biased stretch (basic residues) spans 107–117; the sequence is PKKKDKSKKKQ. Low complexity predominate over residues 118 to 135; sequence PQATSSSSATTTASSPAS. In terms of domain architecture, S4 RNA-binding spans 160–229; sequence QRLSKVLAAA…PKVYFALNKP (70 aa). The active-site Nucleophile is the Asp-274.

It belongs to the pseudouridine synthase RsuA family. As to expression, highly expressed in young seedlings. Expressed in roots, rosette leaves, cauline leaves, stems and flowers.

The protein localises to the plastid. It is found in the chloroplast. Its function is as follows. Responsible for synthesis of pseudouridine in chloroplastic 23S ribosomal RNA. Necessary for normal chloroplast rRNA processing and translation. Required for normal chloroplast development and maintenance. May function in other plastids, such as root amyloplasts. This Arabidopsis thaliana (Mouse-ear cress) protein is Putative ribosomal large subunit pseudouridine synthase SVR1, chloroplastic (SVR1).